A 309-amino-acid polypeptide reads, in one-letter code: Ribonuclease Z (309 aa).

Zn(2+)-binding residues include H63, H65, D67, H68, H145, D216, and H274. D67 serves as the catalytic Proton acceptor.

It belongs to the RNase Z family. In terms of assembly, homodimer. The cofactor is Zn(2+).

The catalysed reaction is Endonucleolytic cleavage of RNA, removing extra 3' nucleotides from tRNA precursor, generating 3' termini of tRNAs. A 3'-hydroxy group is left at the tRNA terminus and a 5'-phosphoryl group is left at the trailer molecule.. In terms of biological role, zinc phosphodiesterase, which displays some tRNA 3'-processing endonuclease activity. Probably involved in tRNA maturation, by removing a 3'-trailer from precursor tRNA. The protein is Ribonuclease Z of Streptococcus gordonii (strain Challis / ATCC 35105 / BCRC 15272 / CH1 / DL1 / V288).